The following is a 366-amino-acid chain: MTPEHLPTEQYEAQLAEKVARLQSMMAPFSGLVPEVFRSPVSHYRMRAEFRLWHDGDDLYHIMFDQQTKSRIRVDTFPAASQLINTLMKAMIAGVRDNHALRHKLFQIDYLTTLSNQAVVSLLYHKKLDEEWREAATALRDALRAQGLNVHLIGRATKTKIELDQDYIDERLPVAGKEIIYRQVENSFTQPNAAMNIQMLEWALEVTKDSKGDLLELYCGNGNFSLALTRNFNRVLATEIAKPSVAAAQYNIAANHIDNVQIIRMAAEEFTQAMNGVREFNRLQGIDLKRYQCETIFVDPPRSGLDSETEKMVQAYPRILYISCNPETLCKNLETLSQTHTVSRLALFDQFPYTHHMECGVLLTAR.

The S-adenosyl-L-methionine site is built by Q190, Y218, N223, E239, and D299. Catalysis depends on C324, which acts as the Nucleophile. E358 serves as the catalytic Proton acceptor.

It belongs to the class I-like SAM-binding methyltransferase superfamily. RNA M5U methyltransferase family. TrmA subfamily.

The enzyme catalyses uridine(54) in tRNA + S-adenosyl-L-methionine = 5-methyluridine(54) in tRNA + S-adenosyl-L-homocysteine + H(+). The catalysed reaction is uridine(341) in tmRNA + S-adenosyl-L-methionine = 5-methyluridine(341) in tmRNA + S-adenosyl-L-homocysteine + H(+). In terms of biological role, dual-specificity methyltransferase that catalyzes the formation of 5-methyluridine at position 54 (m5U54) in all tRNAs, and that of position 341 (m5U341) in tmRNA (transfer-mRNA). In Salmonella paratyphi C (strain RKS4594), this protein is tRNA/tmRNA (uracil-C(5))-methyltransferase.